A 538-amino-acid chain; its full sequence is Bifunctional purine biosynthesis protein PurH (538 aa).

In terms of domain architecture, MGS-like spans 11–158 (PDLHRVRRAL…KNHAYTGVVT (148 aa)).

The protein belongs to the PurH family.

It catalyses the reaction (6R)-10-formyltetrahydrofolate + 5-amino-1-(5-phospho-beta-D-ribosyl)imidazole-4-carboxamide = 5-formamido-1-(5-phospho-D-ribosyl)imidazole-4-carboxamide + (6S)-5,6,7,8-tetrahydrofolate. The catalysed reaction is IMP + H2O = 5-formamido-1-(5-phospho-D-ribosyl)imidazole-4-carboxamide. It participates in purine metabolism; IMP biosynthesis via de novo pathway; 5-formamido-1-(5-phospho-D-ribosyl)imidazole-4-carboxamide from 5-amino-1-(5-phospho-D-ribosyl)imidazole-4-carboxamide (10-formyl THF route): step 1/1. Its pathway is purine metabolism; IMP biosynthesis via de novo pathway; IMP from 5-formamido-1-(5-phospho-D-ribosyl)imidazole-4-carboxamide: step 1/1. This Bartonella bacilliformis (strain ATCC 35685 / KC583 / Herrer 020/F12,63) protein is Bifunctional purine biosynthesis protein PurH.